Reading from the N-terminus, the 500-residue chain is MPSSGRALLDSPLDSGSLTSLDSSVFCSEGEGEPLALGDCFTVNVGGSRFVLSQQALSCFPHTRLGKLAVVVASYRRPGALAAVPSPLELCDDANPVDNEYFFDRSSQAFRYVLHYYRTGRLHVMEQLCALSFLQEIQYWGIDELSIDSCCRDRYFRRKELSETLDFKKDTEDQESQHESEQDFSQGPCPTVRQKLWNILEKPGSSTAARIFGVISIIFVVVSIINMALMSAELSWLDLQLLEILEYVCISWFTGEFVLRFLCVRDRCRFLRKVPNIIDLLAILPFYITLLVESLSGSQTTQELENVGRIVQVLRLLRALRMLKLGRHSTGLRSLGMTITQCYEEVGLLLLFLSVGISIFSTVEYFAEQSIPDTTFTSVPCAWWWATTSMTTVGYGDIRPDTTTGKIVAFMCILSGILVLALPIAIINDRFSACYFTLKLKEAAVRQREALKKLTKNIATDSYISVNLRDVYARSIMEMLRLKGRERASTRSSGGDDFWF.

Topologically, residues 1 to 210 are cytoplasmic; that stretch reads MPSSGRALLD…EKPGSSTAAR (210 aa). The span at 168 to 181 shows a compositional bias: basic and acidic residues; that stretch reads KKDTEDQESQHESE. The interval 168-189 is disordered; it reads KKDTEDQESQHESEQDFSQGPC. The helical transmembrane segment at 211–231 threads the bilayer; it reads IFGVISIIFVVVSIINMALMS. At 232–238 the chain is on the extracellular side; sequence AELSWLD. A helical transmembrane segment spans residues 239 to 259; the sequence is LQLLEILEYVCISWFTGEFVL. Over 260 to 276 the chain is Cytoplasmic; the sequence is RFLCVRDRCRFLRKVPN. The chain crosses the membrane as a helical span at residues 277–297; it reads IIDLLAILPFYITLLVESLSG. The Extracellular segment spans residues 298 to 309; it reads SQTTQELENVGR. A helical; Voltage-sensor transmembrane segment spans residues 310-331; it reads IVQVLRLLRALRMLKLGRHSTG. Residues 332–345 are Cytoplasmic-facing; that stretch reads LRSLGMTITQCYEE. A helical transmembrane segment spans residues 346–366; the sequence is VGLLLLFLSVGISIFSTVEYF. The Selectivity filter motif lies at 392-397; the sequence is TVGYGD. The helical transmembrane segment at 407–427 threads the bilayer; the sequence is IVAFMCILSGILVLALPIAII. The Cytoplasmic segment spans residues 428–500; that stretch reads NDRFSACYFT…RSSGGDDFWF (73 aa).

This sequence belongs to the potassium channel family. V (TC 1.A.1.2) subfamily. Kv8.1/KCNV1 sub-subfamily. Heteromultimer with KCNB1 and KCNB2. Interacts with KCNC4 and KCND1. Detected in brain.

The protein resides in the cell membrane. Its function is as follows. Potassium channel subunit that does not form functional channels by itself. Modulates KCNB1 and KCNB2 channel activity by shifting the threshold for inactivation to more negative values and by slowing the rate of inactivation. Can down-regulate the channel activity of KCNB1, KCNB2, KCNC4 and KCND1, possibly by trapping them in intracellular membranes. The sequence is that of Potassium voltage-gated channel subfamily V member 1 (KCNV1) from Homo sapiens (Human).